Consider the following 706-residue polypeptide: Putative pentatricopeptide repeat-containing protein At3g47840 (706 aa).

PPR repeat units follow at residues 39–69 (VKFDPNSHLRSLINAGNLRAARQVFDKMPHG), 70–104 (DIVSWTSIIKRYVTANNSDEALILFSAMRVVDHAV), 107–141 (DTSVLSVVLKACGQSSNIAYGESLHAYAVKTSLLS), 142–172 (SVYVGSSLLDMYKRVGKIDKSCRVFSEMPFR), 173–203 (NAVTWTAIITGLVHAGRYKEGLTYFSEMSRS), 208–242 (DTYTFAIALKACAGLRQVKYGKAIHTHVIVRGFVT), 243–273 (TLCVANSLATMYTECGEMQDGLCLFENMSER), 274–308 (DVVSWTSLIVAYKRIGQEVKAVETFIKMRNSQVPP), 309–343 (NEQTFASMFSACASLSRLVWGEQLHCNVLSLGLND), 344–374 (SLSVSNSMMKMYSTCGNLVSASVLFQGMRCR), 375–409 (DIISWSTIIGGYCQAGFGEEGFKYFSWMRQSGTKP), 410–444 (TDFALASLLSVSGNMAVIEGGRQVHALALCFGLEQ), 445–475 (NSTVRSSLINMYSKCGSIKEASMIFGETDRD), 476–510 (DIVSLTAMINGYAEHGKSKEAIDLFEKSLKVGFRP), 511–541 (DSVTFISVLTACTHSGQLDLGFHYFNMMQET), and 547–577 (AKEHYGCMVDLLCRAGRLSDAEKMINEMSWK). Positions 582-657 (VWTTLLIACK…EPGWSSIKIK (76 aa)) are type E motif. Residues 658–688 (DCVSAFVSGDRFHPQSEDIYNILELAVSGAE) form a type E(+) motif region.

It belongs to the PPR family. PCMP-E subfamily.

This is Putative pentatricopeptide repeat-containing protein At3g47840 (PCMP-E43) from Arabidopsis thaliana (Mouse-ear cress).